Reading from the N-terminus, the 235-residue chain is Sugar fermentation stimulation protein homolog (235 aa).

This sequence belongs to the SfsA family.

This is Sugar fermentation stimulation protein homolog from Allorhizobium ampelinum (strain ATCC BAA-846 / DSM 112012 / S4) (Agrobacterium vitis (strain S4)).